Consider the following 526-residue polypeptide: NAD(P)H-quinone oxidoreductase chain 4 (526 aa).

Helical transmembrane passes span 5–25 (FPWL…VPLI), 32–52 (WYSF…FFTS), 87–107 (LILL…PVTL), 111–131 (MFHF…AVQD), 133–153 (VLFF…LAIW), 165–185 (FILY…AMYF), 211–231 (FLGL…HTWL), 239–259 (TAPV…YALI), 273–293 (FAPL…LTSF), 302–320 (IAYS…VGSL), 331–351 (QMIS…ATYD), 371–393 (IFAM…GFVA), and 414–434 (LVVL…LSML).

Belongs to the complex I subunit 4 family.

The protein localises to the cell inner membrane. The catalysed reaction is a plastoquinone + NADH + (n+1) H(+)(in) = a plastoquinol + NAD(+) + n H(+)(out). It carries out the reaction a plastoquinone + NADPH + (n+1) H(+)(in) = a plastoquinol + NADP(+) + n H(+)(out). Its function is as follows. NDH-1 shuttles electrons from NAD(P)H, via FMN and iron-sulfur (Fe-S) centers, to quinones in the respiratory chain. The immediate electron acceptor for the enzyme in this species is believed to be plastoquinone. Couples the redox reaction to proton translocation (for every two electrons transferred, four hydrogen ions are translocated across the cytoplasmic membrane), and thus conserves the redox energy in a proton gradient. The protein is NAD(P)H-quinone oxidoreductase chain 4 of Gloeobacter violaceus (strain ATCC 29082 / PCC 7421).